A 130-amino-acid polypeptide reads, in one-letter code: Leptin receptor gene-related protein (130 aa).

A run of 4 helical transmembrane segments spans residues 7–27 (LVAL…GCAL), 32–52 (QYWP…NLIA), 68–88 (LAYF…VVLA), and 99–119 (GLVM…FLIF).

This sequence belongs to the OB-RGRP/VPS55 family.

The protein localises to the golgi apparatus membrane. It localises to the endosome membrane. Functionally, involved in protein trafficking. May be involved in the down-regulation of membrane protein levels. In Danio rerio (Zebrafish), this protein is Leptin receptor gene-related protein (leprot).